The primary structure comprises 141 residues: 16 kDa protein (141 aa).

Residues 100–119 (TVKKSRNSKPSKKKFKERKE) form a disordered region. Residues 102-115 (KKSRNSKPSKKKFK) are compositionally biased toward basic residues.

The protein is 16 kDa protein of Tobacco rattle virus (strain PLB).